Consider the following 323-residue polypeptide: G patch domain-containing protein 4 (323 aa).

Disordered regions lie at residues 1–32 (MSAS…GLGR), 84–110 (GVKV…SNRN), 124–185 (PGGE…SAKL), and 197–323 (AKYG…NKSE). Composition is skewed to basic and acidic residues over residues 9 to 32 (SQGR…GLGR) and 84 to 94 (GVKVNRTKDDD). Residues 11–57 (GRRFAEQQMHKHGWTEGKGLGRRENGISEAIKVKVKCDHAGVGHNSA) enclose the G-patch domain. Positions 131 to 141 (KEPSSSESSDS) are enriched in low complexity. Positions 252–261 (EREEEEEEES) are enriched in acidic residues. Residues 281–291 (SKKKKSKKKHR) show a composition bias toward basic residues. The segment covering 294–306 (SASPQEEQVTEST) has biased composition (polar residues). A compositionally biased stretch (basic residues) spans 311–323 (KPKKKKKKKNKSE).

This is G patch domain-containing protein 4 (gpatch4) from Xenopus tropicalis (Western clawed frog).